A 193-amino-acid chain; its full sequence is Bcl-2-like protein 2 (193 aa).

The residue at position 2 (Ala2) is an N-acetylalanine. A BH4 motif is present at residues 9 to 29 (DTRALVADFVGYKLRQKGYVC). The BH1 signature appears at 85–104 (ELFQGGPNWGRLVAFFVFGA). The short motif at 136–151 (DWIHSSGGWAEFTALY) is the BH2 element.

The protein belongs to the Bcl-2 family. In terms of assembly, interacts with HIF3A isoform 2 (via C-terminus domain). Interacts with BOP. As to expression, expressed in almost all myeloid cell lines and in a wide range of tissues, with highest levels in brain, colon, and salivary gland.

It is found in the mitochondrion membrane. Functionally, promotes cell survival. Blocks dexamethasone-induced apoptosis. Mediates survival of postmitotic Sertoli cells by suppressing death-promoting activity of BAX. This chain is Bcl-2-like protein 2 (Bcl2l2), found in Mus musculus (Mouse).